Consider the following 625-residue polypeptide: Endoglucanase 13 (625 aa).

The first 34 residues, 1–34, serve as a signal peptide directing secretion; that stretch reads MAATMNKTPATTFLLIPAAASLVLLLAAAASVEA. D91 functions as the Nucleophile in the catalytic mechanism. Residue H427 is part of the active site. The N-linked (GlcNAc...) asparagine glycan is linked to N440. Catalysis depends on residues D479 and E488. Residues 509–530 are disordered; that stretch reads ADNTPEYTPAPNAPSPSNGGSP.

This sequence belongs to the glycosyl hydrolase 9 (cellulase E) family. As to expression, expressed in roots and flowers.

Its subcellular location is the secreted. It catalyses the reaction Endohydrolysis of (1-&gt;4)-beta-D-glucosidic linkages in cellulose, lichenin and cereal beta-D-glucans.. The sequence is that of Endoglucanase 13 (GLU6) from Oryza sativa subsp. japonica (Rice).